Reading from the N-terminus, the 478-residue chain is Cysteine protease ATG4B (478 aa).

Residues 1-15 (MTSLPDRGVSSSSSD) are compositionally biased toward polar residues. Residues 1–20 (MTSLPDRGVSSSSSDPLCEG) are disordered. Cysteine 164 functions as the Nucleophile in the catalytic mechanism. Residues aspartate 361 and histidine 363 contribute to the active site.

It belongs to the peptidase C54 family. In terms of assembly, interacts with ATG8. Constitutively expressed.

Its subcellular location is the cytoplasm. It carries out the reaction [protein]-C-terminal L-amino acid-glycyl-phosphatidylethanolamide + H2O = [protein]-C-terminal L-amino acid-glycine + a 1,2-diacyl-sn-glycero-3-phosphoethanolamine. In terms of biological role, cysteine protease that plays a key role in autophagy by mediating both proteolytic activation and delipidation of ATG8 family proteins. The protease activity is required for proteolytic activation of ATG8 family proteins: cleaves the C-terminal amino acid of ATG8 proteins to reveal a C-terminal glycine. Exposure of the glycine at the C-terminus is essential for ATG8 proteins conjugation to phosphatidylethanolamine (PE) and insertion to membranes, which is necessary for autophagy. In addition to the protease activity, also mediates delipidation of PE-conjugated ATG8 proteins. The sequence is that of Cysteine protease ATG4B (ATG4B) from Oryza sativa subsp. indica (Rice).